Here is a 448-residue protein sequence, read N- to C-terminus: Integrator complex subunit 15 (448 aa).

This sequence belongs to the Integrator subunit 15 family. As to quaternary structure, component of the Integrator complex, composed of core subunits INTS1, INTS2, INTS3, INTS4, INTS5, INTS6, INTS7, INTS8, INTS9/RC74, INTS10, INTS11/CPSF3L, INTS12, INTS13, INTS14 and INTS15. The core complex associates with protein phosphatase 2A subunits PPP2CA and PPP2R1A, to form the Integrator-PP2A (INTAC) complex. INTS15 is part of the tail subcomplex, composed of INTS10, INTS13, INTS14 and INTS15.

It localises to the nucleus. Its subcellular location is the chromosome. Functionally, component of the integrator complex, a multiprotein complex that terminates RNA polymerase II (Pol II) transcription in the promoter-proximal region of genes. The integrator complex provides a quality checkpoint during transcription elongation by driving premature transcription termination of transcripts that are unfavorably configured for transcriptional elongation: the complex terminates transcription by (1) catalyzing dephosphorylation of the C-terminal domain (CTD) of Pol II subunit POLR2A/RPB1 and SUPT5H/SPT5, (2) degrading the exiting nascent RNA transcript via endonuclease activity and (3) promoting the release of Pol II from bound DNA. The integrator complex is also involved in terminating the synthesis of non-coding Pol II transcripts, such as enhancer RNAs (eRNAs), small nuclear RNAs (snRNAs), telomerase RNAs and long non-coding RNAs (lncRNAs). INTS15 is part of the integrator tail module that acts as a platform for the recruitment of transcription factors at promoters. Within the integrator complex, INTS15 is required to bridge different integrator modules. The sequence is that of Integrator complex subunit 15 from Mus musculus (Mouse).